Reading from the N-terminus, the 257-residue chain is MPYLYRIAYDGTLFYGFTGHPNSLEPKLRAALGEILGRGSRTDPGVSAVANVVMTSQRLHLGYVNSKLPRGVWAWGVAEVPEGFNPRRAKARRYLYVAPHWGEDVEAMREAAAVLVGTHDYSSFIKRRGDKATPTVTTVYKIEVEQRGGLIYMMFVGRGFRNKMIRKMAWAILATGRGVLKASDLRELVERPRPGAVPSAPAEGLVLLDIDYGIEFEVYHTALREAYTYFLRKYRAVEAHAAALKAAGEALARLDVV.

Catalysis depends on aspartate 43, which acts as the Nucleophile. Tyrosine 94 contributes to the substrate binding site.

It belongs to the tRNA pseudouridine synthase TruA family.

The catalysed reaction is uridine(38/39/40) in tRNA = pseudouridine(38/39/40) in tRNA. In terms of biological role, formation of pseudouridine at positions 38, 39 and 40 in the anticodon stem and loop of transfer RNAs. The sequence is that of tRNA pseudouridine synthase A from Pyrobaculum arsenaticum (strain DSM 13514 / JCM 11321 / PZ6).